We begin with the raw amino-acid sequence, 104 residues long: UPF0235 protein Sfri_2863 (104 aa).

It belongs to the UPF0235 family.

The protein is UPF0235 protein Sfri_2863 of Shewanella frigidimarina (strain NCIMB 400).